Here is a 353-residue protein sequence, read N- to C-terminus: Farnesyl pyrophosphate synthase (353 aa).

The isopentenyl diphosphate site is built by K57, R60, and Q96. An N6-(2-hydroxyisobutyryl)lysine; alternate modification is found at K57. K57 carries the post-translational modification N6-acetyllysine; alternate. Mg(2+) is bound by residues D103 and D107. R112 provides a ligand contact to dimethylallyl diphosphate. Position 113 (R113) interacts with isopentenyl diphosphate. Residues K200, T201, Q240, K257, and K266 each contribute to the dimethylallyl diphosphate site.

Belongs to the FPP/GGPP synthase family. Homodimer. Interacts with RSAD2. Requires Mg(2+) as cofactor.

Its subcellular location is the cytoplasm. The enzyme catalyses isopentenyl diphosphate + dimethylallyl diphosphate = (2E)-geranyl diphosphate + diphosphate. The catalysed reaction is isopentenyl diphosphate + (2E)-geranyl diphosphate = (2E,6E)-farnesyl diphosphate + diphosphate. The protein operates within isoprenoid biosynthesis; farnesyl diphosphate biosynthesis; farnesyl diphosphate from geranyl diphosphate and isopentenyl diphosphate: step 1/1. Its pathway is isoprenoid biosynthesis; geranyl diphosphate biosynthesis; geranyl diphosphate from dimethylallyl diphosphate and isopentenyl diphosphate: step 1/1. Inactivated by interferon-induced RSAD2. This inactivation may result of disruption of lipid rafts at the plasma membrane, and thus have an antiviral effect since many enveloped viruses need lipid rafts to bud efficiently out of the cell. Functionally, key enzyme in isoprenoid biosynthesis which catalyzes the formation of farnesyl diphosphate (FPP), a precursor for several classes of essential metabolites including sterols, dolichols, carotenoids, and ubiquinones. FPP also serves as substrate for protein farnesylation and geranylgeranylation. Catalyzes the sequential condensation of isopentenyl pyrophosphate with the allylic pyrophosphates, dimethylallyl pyrophosphate, and then with the resultant geranylpyrophosphate to the ultimate product farnesyl pyrophosphate. The polypeptide is Farnesyl pyrophosphate synthase (Fdps) (Mus musculus (Mouse)).